The sequence spans 493 residues: Vinyl phenol reductase (493 aa).

FAD contacts are provided by Ala-19, Glu-38, Ser-46, Thr-50, Gly-52, Ala-156, Asp-224, Asn-448, and Val-467.

Belongs to the FAD-dependent oxidoreductase 2 family. FRD/SDH subfamily. FAD serves as cofactor.

The enzyme catalyses 4-vinylphenol + NADH + H(+) = 4-ethylphenol + NAD(+). The catalysed reaction is 3,4-dihydroxystyrene + NADH + H(+) = 4-ethylcatechol + NAD(+). It carries out the reaction 2-methoxy-4-vinylphenol + NADH + H(+) = 4-ethyl-2-methoxyphenol + NAD(+). Involved in the production of ethylphenols during the degradation of hydroxycinnamic acids. Catalyzes the reduction of vinylphenols (4-vinylphenol (4-hydroxystyrene), 4-vinylcatechol (3,4-dihydroxystyrene), and 4-vinylguaiacol (2-methoxy-4-vinylphenol)) to their corresponding ethylphenols (4-ethylphenol, 4-ethylcatechol, and 4-ethylguaiacol, respectively) in the presence of NADH. These compounds are considered the most important flavor components of fermented soy sauce, and, on the other hand, are considered off flavor and responsible for sensorial wine and cider alteration. The 4-ethylphenol produced by the gut bacteria L.plantarum strain WCFS1 can get subsequent sulfation to 4-ethylphenyl sulfate (4EPS) by host sulfotransferase (SULT1A1); 4EPS can enter the brain and seems to alter brain activity. Therefore, this enzyme likely plays a role in gut microbiota-host metabolic interactions. This Lactiplantibacillus plantarum (strain ATCC BAA-793 / NCIMB 8826 / WCFS1) (Lactobacillus plantarum) protein is Vinyl phenol reductase.